A 498-amino-acid polypeptide reads, in one-letter code: ATP synthase subunit beta, chloroplastic (498 aa).

Threonine 6 carries the post-translational modification Phosphothreonine. Serine 13 is modified (phosphoserine). 172 to 179 serves as a coordination point for ATP; sequence GGAGVGKT.

It belongs to the ATPase alpha/beta chains family. F-type ATPases have 2 components, CF(1) - the catalytic core - and CF(0) - the membrane proton channel. CF(1) has five subunits: alpha(3), beta(3), gamma(1), delta(1), epsilon(1). CF(0) has four main subunits: a(1), b(1), b'(1) and c(9-12).

Its subcellular location is the plastid. The protein resides in the chloroplast thylakoid membrane. It catalyses the reaction ATP + H2O + 4 H(+)(in) = ADP + phosphate + 5 H(+)(out). Functionally, produces ATP from ADP in the presence of a proton gradient across the membrane. The catalytic sites are hosted primarily by the beta subunits. This Nasturtium officinale (Watercress) protein is ATP synthase subunit beta, chloroplastic.